A 196-amino-acid polypeptide reads, in one-letter code: Holliday junction branch migration complex subunit RuvA (196 aa).

Residues 1–63 (MIASVRGEVI…EDSMTLYGFA (63 aa)) form a domain I region. The segment at 64 to 142 (DADARDLFGT…PVTTGAGVTA (79 aa)) is domain II. Residues 143–151 (VGGHAVRGP) are flexible linker. The interval 151–196 (PVVEALVGLGFAAKQAEEACDKVLAADPDATTSSALRAALSMLGKK) is domain III.

It belongs to the RuvA family. In terms of assembly, homotetramer. Forms an RuvA(8)-RuvB(12)-Holliday junction (HJ) complex. HJ DNA is sandwiched between 2 RuvA tetramers; dsDNA enters through RuvA and exits via RuvB. An RuvB hexamer assembles on each DNA strand where it exits the tetramer. Each RuvB hexamer is contacted by two RuvA subunits (via domain III) on 2 adjacent RuvB subunits; this complex drives branch migration. In the full resolvosome a probable DNA-RuvA(4)-RuvB(12)-RuvC(2) complex forms which resolves the HJ.

It is found in the cytoplasm. The RuvA-RuvB-RuvC complex processes Holliday junction (HJ) DNA during genetic recombination and DNA repair, while the RuvA-RuvB complex plays an important role in the rescue of blocked DNA replication forks via replication fork reversal (RFR). RuvA specifically binds to HJ cruciform DNA, conferring on it an open structure. The RuvB hexamer acts as an ATP-dependent pump, pulling dsDNA into and through the RuvAB complex. HJ branch migration allows RuvC to scan DNA until it finds its consensus sequence, where it cleaves and resolves the cruciform DNA. The protein is Holliday junction branch migration complex subunit RuvA of Mycobacterium sp. (strain JLS).